Here is a 295-residue protein sequence, read N- to C-terminus: Tissue factor (295 aa).

An N-terminal signal peptide occupies residues 1-32; that stretch reads METPAWPRVPRPETAVARTLLLGWVFAQVAGA. Topologically, residues 33–251 are extracellular; the sequence is SGTTNTVAAY…MGQEKGEFRE (219 aa). Short sequence motifs (WKS motif) lie at residues 46 to 48 and 77 to 79; these read WKS. A disulfide bond links C81 and C89. 2 N-linked (GlcNAc...) asparagine glycosylation sites follow: N156 and N169. A WKS motif motif is present at residues 190 to 192; sequence WKS. An intrachain disulfide couples C218 to C241. Residues 252–274 form a helical membrane-spanning segment; that stretch reads IFYIIGAVVFVVIILVIILAISL. Over 275–295 the chain is Cytoplasmic; the sequence is HKCRKAGVGQSWKENSPLNVS. Residue C277 is the site of S-palmitoyl cysteine attachment.

The protein belongs to the tissue factor family. In terms of assembly, interacts with HSPE; the interaction, inhibited by heparin, promotes the generation of activated factor X and activates coagulation in the presence of activated factor VII. Lung, placenta and pancreas.

The protein resides in the membrane. The protein localises to the secreted. Functionally, initiates blood coagulation by forming a complex with circulating factor VII or VIIa. The [TF:VIIa] complex activates factors IX or X by specific limited proteolysis. TF plays a role in normal hemostasis by initiating the cell-surface assembly and propagation of the coagulation protease cascade. In Homo sapiens (Human), this protein is Tissue factor (F3).